We begin with the raw amino-acid sequence, 73 residues long: U3-agatoxin-Ao1j (73 aa).

Positions 1-20 are cleaved as a signal peptide; sequence MRTIISLLLLSAMVFAVIEA. A propeptide spanning residues 21–34 is cleaved from the precursor; it reads ISLEEGLQLFEGER. Disulfide bonds link cysteine 36/cysteine 52, cysteine 43/cysteine 57, cysteine 51/cysteine 67, and cysteine 59/cysteine 65. A Serine amide modification is found at serine 71.

This sequence belongs to the neurotoxin 07 (Beta/delta-agtx) family. 03 (aga-4) subfamily. Aga sub-subfamily. In terms of tissue distribution, expressed by the venom gland.

Its subcellular location is the secreted. Insecticidal neurotoxin that induces an irreversible spastic paralysis when injected into insects. Modifies presynaptic voltage-gated sodium channels (Nav), causing them to open at the normal resting potential of the nerve. This leads to spontaneous release of neurotransmitter and repetitive action potentials in motor neurons. In Agelena orientalis (Funnel-web spider), this protein is U3-agatoxin-Ao1j.